Consider the following 434-residue polypeptide: Enolase (434 aa).

Residue glutamine 167 coordinates (2R)-2-phosphoglycerate. Glutamate 209 functions as the Proton donor in the catalytic mechanism. 3 residues coordinate Mg(2+): aspartate 246, glutamate 291, and aspartate 318. (2R)-2-phosphoglycerate-binding residues include lysine 343, arginine 372, serine 373, and lysine 394. The Proton acceptor role is filled by lysine 343.

This sequence belongs to the enolase family. In terms of assembly, component of the RNA degradosome, a multiprotein complex involved in RNA processing and mRNA degradation. Mg(2+) is required as a cofactor.

Its subcellular location is the cytoplasm. It is found in the secreted. The protein localises to the cell surface. The enzyme catalyses (2R)-2-phosphoglycerate = phosphoenolpyruvate + H2O. The protein operates within carbohydrate degradation; glycolysis; pyruvate from D-glyceraldehyde 3-phosphate: step 4/5. Catalyzes the reversible conversion of 2-phosphoglycerate (2-PG) into phosphoenolpyruvate (PEP). It is essential for the degradation of carbohydrates via glycolysis. The polypeptide is Enolase (Buchnera aphidicola subsp. Acyrthosiphon pisum (strain 5A)).